Reading from the N-terminus, the 559-residue chain is Frizzled-1 (559 aa).

A signal peptide spans 1–35; it reads MKHSHLLQRCSAQLCTRGSSLILSLLLSVCLSVEG. The Extracellular segment spans residues 36–239; that stretch reads QYNGEKGISI…FAPEELNFAR (204 aa). The 120-residue stretch at 46–165 folds into the FZ domain; that stretch reads PDHGYCQPIS…NGAGELCVGQ (120 aa). 5 cysteine pairs are disulfide-bonded: Cys-51-Cys-112, Cys-59-Cys-105, Cys-96-Cys-133, Cys-122-Cys-162, and Cys-126-Cys-150. Residue Asn-65 is glycosylated (N-linked (GlcNAc...) asparagine). A glycan (N-linked (GlcNAc...) asparagine) is linked at Asn-166. A helical transmembrane segment spans residues 240 to 260; sequence IWIGIWSVLCCASTLFTVLTY. At 261-273 the chain is on the cytoplasmic side; sequence LVDMKRFSYPERP. Residues 274 to 294 traverse the membrane as a helical segment; that stretch reads IIFLSGCYTMVAIAYIAGFLL. Topologically, residues 295–321 are extracellular; that stretch reads EDKVVCNERFAEDGYKTVAQGTKKEGC. Residues 322 to 342 form a helical membrane-spanning segment; it reads TFLFMMLYFFSMASSIWWVIL. Topologically, residues 343–364 are cytoplasmic; the sequence is SLTWFLAAGMKWGHEAIEANSQ. A helical transmembrane segment spans residues 365–385; sequence YFHLAAWAVPAIKTITILAVG. At 386 to 408 the chain is on the extracellular side; that stretch reads QVDGDTLSGVCFVGINNVDALRG. The chain crosses the membrane as a helical span at residues 409–429; it reads FVLAPLFVYLFIGTSFLLAGF. Residues 430–455 are Cytoplasmic-facing; sequence VSLFRIRTIMKHDGTKTEKLEKLMVR. The helical transmembrane segment at 456 to 476 threads the bilayer; that stretch reads IGIFSVLYTVPATIVIACYFY. Topologically, residues 477 to 513 are extracellular; that stretch reads EQAFREQWEKSWISQSCKTYAIPCPSTGHPPMSPDFT. A helical membrane pass occupies residues 514–534; it reads VFMIKYLMTLIVGITSGFWIW. Topologically, residues 535-559 are cytoplasmic; the sequence is SGKTLNSWRKFYTRLTNSKQGETTV. The short motif at 537–542 is the Lys-Thr-X-X-X-Trp motif, mediates interaction with the PDZ domain of Dvl family members element; it reads KTLNSW. Positions 557–559 match the PDZ-binding motif; sequence TTV.

This sequence belongs to the G-protein coupled receptor Fz/Smo family. As to quaternary structure, interacts with wnt8. In the embryo, expressed in the heart, pronephros and otic vesicles.

Its subcellular location is the cell membrane. Functionally, receptor for Wnt proteins. Functions in the canonical Wnt/beta-catenin signaling pathway. The canonical Wnt/beta-catenin signaling pathway leads to the activation of disheveled proteins, inhibition of GSK-3 kinase, nuclear accumulation of beta-catenin and activation of Wnt target genes. A second signaling pathway involving PKC and calcium fluxes has been seen for some family members, but it is not yet clear if it represents a distinct pathway or if it can be integrated in the canonical pathway, as PKC seems to be required for Wnt-mediated inactivation of GSK-3 kinase. Both pathways seem to involve interactions with G-proteins. May be involved in transduction and intercellular transmission of polarity information during tissue morphogenesis and/or in differentiated tissues. In Xenopus laevis (African clawed frog), this protein is Frizzled-1 (fzd1).